The following is a 317-amino-acid chain: Terpene synthase 3 (317 aa).

The short motif at 96 to 101 is the DDxx(x)D/E motif element; sequence DDFYFE. The NDxxSxxxD/E motif signature appears at 223–231; it reads NDMVSFERE.

It belongs to the terpene synthase family.

Its function is as follows. Terpene synthase that converts its substrate farnesyl diphosphate (FPP) into the sesquiterpene CAS 137235-51-9 as a major product. Is also able to convert FPP into 9-epi-(E)-caryophyllene, alpha-neoclovene, beta-neoclovene, and 3 yet unidentified sesquiterpenes. This chain is Terpene synthase 3, found in Dictyostelium purpureum (Slime mold).